We begin with the raw amino-acid sequence, 298 residues long: Sulfofructose kinase (298 aa).

6-deoxy-6-sulfo-D-fructose contacts are provided by aspartate 13, lysine 27, glycine 39, serine 95, and arginine 138. Positions 212, 214, 217, and 243 each coordinate ATP. 6-deoxy-6-sulfo-D-fructose is bound at residue aspartate 244.

It belongs to the carbohydrate kinase PfkB family. As to quaternary structure, homodimer.

The enzyme catalyses 6-deoxy-6-sulfo-D-fructose + ATP = 6-deoxy-6-sulfo-D-fructose 1-phosphate + ADP + H(+). With respect to regulation, strongly inhibited by ADP. Activated by sulfoquinovose (SQ), sulfolactaldehyde (SLA) and dihydroxyacetone phosphate (DHAP) (through effects on KM) and by fructose 6-phosphate (F6P), fructose bisphosphate (FBP), phosphoenolpyruvate (PEP) and citrate (through effects on kcat/KM). Its function is as follows. Phosphorylates 6-deoxy-6-sulfo-D-fructose (SF) to 6-deoxy-6-sulfo-D-fructose 1-phosphate (SFP). Cannot phosphorylate fructose 6-phosphate. The sequence is that of Sulfofructose kinase (yihV) from Escherichia coli (strain K12).